The primary structure comprises 431 residues: MTNLLWQKPGVAVDAKIQTFLAGDDVILDREFFLYDIAASKAHAQGLQHIGILSLEELGGLSEQLDLLAGDFRSGAFVLDAHYEDCHSAIEARLTERLGDAGRKIHTGRSRNDQILVATRLWLKDKLQRVAALSTEVAKVALDRAQAEAELPVPGYTHIQRAVVSSAGMWWAGWAEAFIDNAVRANDTFKLVDTNPLGTAAGYGVNLPLDRAHTTAELGFARLQVSPIYAQLSRGKFELAALEALGGATLDLRRIAWDLSLFTSGEFAFVALPAQYTTGSSIMPNKRNPDVIELMRATHASVAAARTEIEQLLSLPSGYHRDLQSSKGAIVHGFARGLAALELLPALLANLEWRPDKLRAAIDSGMYATDVAVEAAVAGVPFRDAYKAAAAASDSAGQGRTPEASLAARVSPGAAADLQLDVLRARWEALQ.

The protein belongs to the lyase 1 family. Argininosuccinate lyase subfamily.

The protein resides in the cytoplasm. It catalyses the reaction 2-(N(omega)-L-arginino)succinate = fumarate + L-arginine. It participates in amino-acid biosynthesis; L-arginine biosynthesis; L-arginine from L-ornithine and carbamoyl phosphate: step 3/3. The protein is Argininosuccinate lyase of Xanthomonas campestris pv. campestris (strain B100).